The sequence spans 689 residues: Glycine--tRNA ligase beta subunit (689 aa).

Belongs to the class-II aminoacyl-tRNA synthetase family. In terms of assembly, tetramer of two alpha and two beta subunits.

Its subcellular location is the cytoplasm. The enzyme catalyses tRNA(Gly) + glycine + ATP = glycyl-tRNA(Gly) + AMP + diphosphate. The chain is Glycine--tRNA ligase beta subunit from Shigella boydii serotype 4 (strain Sb227).